A 200-amino-acid polypeptide reads, in one-letter code: Cell division protein SepF (200 aa).

Disordered regions lie at residues 35 to 60 and 170 to 200; these read NLYQQENPQPPAPQESATAQNRRWRE and LHEVPQPPARPSRPTGSPNQTWGNETNRMAQ. Residues 183–200 show a composition bias toward polar residues; it reads PTGSPNQTWGNETNRMAQ.

This sequence belongs to the SepF family. Homodimer. Interacts with FtsZ.

It localises to the cytoplasm. Its function is as follows. Cell division protein that is part of the divisome complex and is recruited early to the Z-ring. Probably stimulates Z-ring formation, perhaps through the cross-linking of FtsZ protofilaments. Its function overlaps with FtsA. The polypeptide is Cell division protein SepF (Nostoc punctiforme (strain ATCC 29133 / PCC 73102)).